The primary structure comprises 261 residues: Taurine import ATP-binding protein TauB (261 aa).

Positions 4–233 (LQLERIGAQY…RYAAGESARA (230 aa)) constitute an ABC transporter domain. 38-45 (GPSGSGKT) serves as a coordination point for ATP.

It belongs to the ABC transporter superfamily. Taurine importer (TC 3.A.1.17.1) family. The complex is composed of two ATP-binding proteins (TauB), two transmembrane proteins (TauC) and a solute-binding protein (TauA).

Its subcellular location is the cell inner membrane. It catalyses the reaction taurine(out) + ATP + H2O = taurine(in) + ADP + phosphate + H(+). In terms of biological role, part of the ABC transporter complex TauABC involved in taurine import. Responsible for energy coupling to the transport system. In Pseudomonas savastanoi pv. phaseolicola (strain 1448A / Race 6) (Pseudomonas syringae pv. phaseolicola (strain 1448A / Race 6)), this protein is Taurine import ATP-binding protein TauB.